The primary structure comprises 129 residues: UPF0212 protein MM_2357 (129 aa).

It belongs to the UPF0212 family.

In Methanosarcina mazei (strain ATCC BAA-159 / DSM 3647 / Goe1 / Go1 / JCM 11833 / OCM 88) (Methanosarcina frisia), this protein is UPF0212 protein MM_2357.